A 1008-amino-acid chain; its full sequence is RNA cytidine acetyltransferase (1008 aa).

ATP contacts are provided by residues 282–291 (GRGKSAALGL) and Arg443. Residues 531–713 (CLLGPVQRMD…VPVYLSQKSN (183 aa)) form the N-acetyltransferase domain. Acetyl-CoA is bound by residues 601-603 (VAT), 608-614 (QRMGYGK), and Asn700. A Phosphoserine modification is found at Ser907. Residues 950–1008 (ALETNGTGGGSGLLSVKSGVKRLDGPIETREDGDLAAPLSKKKKKNNPKQRRSQGKSLI) form a disordered region. The segment covering 970–982 (KRLDGPIETREDG) has biased composition (basic and acidic residues). A compositionally biased stretch (basic residues) spans 989–1008 (SKKKKKNNPKQRRSQGKSLI).

It belongs to the RNA cytidine acetyltransferase family. NAT10 subfamily. Component of the PRC1 complex (PSC, PC, PH and dRING1) in 0-12 hours Drosophila embryos. This complex is distinct from the Esc/E(z) complex, which contains many other PcG proteins like Esc, E(z), Su(z)12, HDAC1/Rpd3, Caf1-55 and probably Pho. The two complexes however cooperate and interact together during the first 3 hours of development to establish PcG silencing. Part of the small subunit (SSU) processome, composed of more than 70 proteins and the RNA chaperone small nucleolar RNA (snoRNA) U3.

Its subcellular location is the nucleus. The protein resides in the nucleolus. It carries out the reaction a cytidine in 18S rRNA + acetyl-CoA + ATP + H2O = an N(4)-acetylcytidine in 18S rRNA + ADP + phosphate + CoA + H(+). The enzyme catalyses a cytidine in tRNA + acetyl-CoA + ATP + H2O = an N(4)-acetylcytidine in tRNA + ADP + phosphate + CoA + H(+). Functionally, RNA cytidine acetyltransferase with specificity toward both 18S rRNA and tRNAs. Catalyzes the formation of N(4)-acetylcytidine (ac4C) in 18S rRNA. Required for early nucleolar cleavages of precursor rRNA at sites A0, A1 and A2 during 18S rRNA synthesis. Catalyzes the formation of ac4C in serine and leucine tRNAs. Requires a tRNA-binding adapter protein for full tRNA acetyltransferase activity but not for 18S rRNA acetylation. Polycomb group (PcG) protein. PcG proteins act by forming multiprotein complexes, which are required to maintain the transcriptionally repressive state of homeotic genes throughout development. PcG proteins are not required to initiate repression, but to maintain it during later stages of development. They probably act via the methylation of histones, rendering chromatin heritably changed in its expressibility. Part of the small subunit (SSU) processome, first precursor of the small eukaryotic ribosomal subunit. During the assembly of the SSU processome in the nucleolus, many ribosome biogenesis factors, an RNA chaperone and ribosomal proteins associate with the nascent pre-rRNA and work in concert to generate RNA folding, modifications, rearrangements and cleavage as well as targeted degradation of pre-ribosomal RNA by the RNA exosome. This chain is RNA cytidine acetyltransferase (l(1)G0020), found in Drosophila melanogaster (Fruit fly).